A 917-amino-acid polypeptide reads, in one-letter code: Dolichyl-phosphooligosaccharide-protein glycotransferase (917 aa).

The span at 1-10 (MTENNEKVKN) shows a compositional bias: basic and acidic residues. Residues 1–20 (MTENNEKVKNSDSANNQSSK) are disordered. Residues 1-38 (MTENNEKVKNSDSANNQSSKNSKFNFNFEDKKVKCAKT) lie on the Cytoplasmic side of the membrane. Positions 11–20 (SDSANNQSSK) are enriched in low complexity. Residues 39 to 59 (ILIIIFLAFLSFQMRAQTADM) form a helical membrane-spanning segment. Over 60-154 (GFTTNEQYLD…AMDSTVTLMN (95 aa)) the chain is Extracellular. A DXD motif 1 motif is present at residues 82 to 84 (ALD). Residue Asp84 participates in Mn(2+) binding. A helical membrane pass occupies residues 155–175 (AAFWVPAILSMFLITPIFFTV). The Cytoplasmic segment spans residues 176 to 182 (RRITSSD). Residues 183–203 (IGGAVAAILASLSPSIFVKTV) traverse the membrane as a helical segment. The Extracellular segment spans residues 204–209 (AGFSDT). Asp208 is a Mn(2+) binding site. Positions 208-210 (DTP) match the DXD motif 2 motif. A helical transmembrane segment spans residues 210 to 230 (PILEILPLLFIVWFIIEAIHY). The Cytoplasmic segment spans residues 231-237 (SKEKNYK). A helical membrane pass occupies residues 238–260 (SLIYGLLATLMLALYPFMWSAWW). The Extracellular segment spans residues 261 to 263 (YGY). A helical membrane pass occupies residues 264–286 (YIVIAFLVIYAIYKGISYNSIAK). Residues 287–308 (YTKSKNNNHKDKIESEKLEMLN) are Cytoplasmic-facing. A helical membrane pass occupies residues 309-329 (ILKISGLFIIGGAVLITALYG). The Extracellular segment spans residues 330 to 372 (VSTTMNALQAPLNYLGLDEVSSQTGWPNVLTTVSELDTASLDE). The short motif at 361-364 (TVSE) is the TIXE motif element. Glu364 contributes to the Mn(2+) binding site. Residues 373–393 (IISSSLGSIHLFAIGLIGIFL) form a helical membrane-spanning segment. At 394 to 413 (SLFRKVLTPVKQISNGLAEK) the chain is on the cytoplasmic side. A helical transmembrane segment spans residues 414–434 (LDIKYALLLIIWFAVTFLAAS). At 435–438 (KGVR) the chain is on the extracellular side. Position 438 (Arg438) interacts with a glycophospholipid. A helical membrane pass occupies residues 439–459 (FVALMVPPLSIGVGIFVGFIE). At 460–469 (QFIKNNLDKK) the chain is on the cytoplasmic side. Residues 470–490 (YEYVAYPTIAIIVLYALFTIY) traverse the membrane as a helical segment. The Extracellular segment spans residues 491 to 506 (RADSADLVRMLLPSNY). A helical membrane pass occupies residues 507–527 (VPIAEGIMLASLAVLIIYKVA). Residues 528 to 541 (ELIAESNKKLVMNK) are Cytoplasmic-facing. A helical membrane pass occupies residues 542–562 (IFMILLAIGLITPTIATIVPF). Topologically, residues 563–917 (YSVPTYNDGW…FSVDYGNYSK (355 aa)) are extracellular. An interacts with target acceptor peptide in protein substrate region spans residues 592-594 (WWD). The short motif at 592–596 (WWDNG) is the WWDYG motif element. The MI motif motif lies at 719–726 (MTSIASVW).

This sequence belongs to the STT3 family. It depends on Mn(2+) as a cofactor. Mg(2+) serves as cofactor.

Its subcellular location is the cell membrane. The enzyme catalyses an archaeal dolichyl phosphooligosaccharide + [protein]-L-asparagine = an archaeal dolichyl phosphate + a glycoprotein with the oligosaccharide chain attached by N-beta-D-glycosyl linkage to a protein L-asparagine.. It participates in cell surface structure biogenesis; S-layer biogenesis. It functions in the pathway protein modification; protein glycosylation. Functionally, oligosaccharyl transferase (OST) that catalyzes the initial transfer of a defined glycan (ManNAcGlc-2,3-diNAcAGlcNAc in M.voltae) from the lipid carrier dolichol-monophosphate to an asparagine residue within an Asn-X-Ser/Thr consensus motif in nascent polypeptide chains, the first step in protein N-glycosylation. Involved in the assembly of an N-linked disaccharide that decorates the S-layer glycoprotein and flagellins. The sequence is that of Dolichyl-phosphooligosaccharide-protein glycotransferase from Methanococcus voltae.